The sequence spans 812 residues: Eukaryotic translation initiation factor 3 subunit C (812 aa).

Residues 1–105 (MSRFFSRGYH…SDESDDEGKK (105 aa)) are disordered. Acidic residues-rich tracts occupy residues 17–40 (SEDE…EVVS) and 48–59 (SESESAESDDDS). The PCI domain occupies 607–783 (FHQHINLDLI…EMLIFDKGDE (177 aa)).

Belongs to the eIF-3 subunit C family. As to quaternary structure, component of the eukaryotic translation initiation factor 3 (eIF-3) complex.

The protein resides in the cytoplasm. Component of the eukaryotic translation initiation factor 3 (eIF-3) complex, which is involved in protein synthesis of a specialized repertoire of mRNAs and, together with other initiation factors, stimulates binding of mRNA and methionyl-tRNAi to the 40S ribosome. The eIF-3 complex specifically targets and initiates translation of a subset of mRNAs involved in cell proliferation. This Eremothecium gossypii (strain ATCC 10895 / CBS 109.51 / FGSC 9923 / NRRL Y-1056) (Yeast) protein is Eukaryotic translation initiation factor 3 subunit C.